A 177-amino-acid polypeptide reads, in one-letter code: Large ribosomal subunit protein uL16 (177 aa).

Belongs to the universal ribosomal protein uL16 family. Part of the 50S ribosomal subunit. Weakly binds 5S rRNA. Probably binds the A and P site tRNAs.

Its function is as follows. This is 1 of 5 proteins that mediate the attachment of the 5S rRNA onto the large ribosomal subunit, stabilizing the orientation of adjacent RNA domains. Modeling places the A and P site tRNAs in close proximity to this protein. The polypeptide is Large ribosomal subunit protein uL16 (Haloarcula marismortui (strain ATCC 43049 / DSM 3752 / JCM 8966 / VKM B-1809) (Halobacterium marismortui)).